We begin with the raw amino-acid sequence, 92 residues long: N(2)-fixation sustaining protein CowN (92 aa).

Belongs to the CowN family.

Functionally, is required to sustain N(2)-dependent growth in the presence of low levels of carbon monoxide (CO). Probably acts by protecting the N(2) fixation ability of the nitrogenase complex, which is inactivated in the presence of CO. The chain is N(2)-fixation sustaining protein CowN from Rhodopseudomonas palustris (strain HaA2).